A 116-amino-acid polypeptide reads, in one-letter code: Iron-sulfur cluster insertion protein ErpA (116 aa).

3 residues coordinate iron-sulfur cluster: Cys44, Cys108, and Cys110.

This sequence belongs to the HesB/IscA family. Homodimer. Iron-sulfur cluster is required as a cofactor.

In terms of biological role, required for insertion of 4Fe-4S clusters for at least IspG. This Shewanella oneidensis (strain ATCC 700550 / JCM 31522 / CIP 106686 / LMG 19005 / NCIMB 14063 / MR-1) protein is Iron-sulfur cluster insertion protein ErpA.